We begin with the raw amino-acid sequence, 335 residues long: 4-hydroxy-3-methylbut-2-enyl diphosphate reductase (335 aa).

A [4Fe-4S] cluster-binding site is contributed by C21. Residues H50 and H86 each coordinate (2E)-4-hydroxy-3-methylbut-2-enyl diphosphate. Residues H50 and H86 each contribute to the dimethylallyl diphosphate site. 2 residues coordinate isopentenyl diphosphate: H50 and H86. C108 is a [4Fe-4S] cluster binding site. H136 serves as a coordination point for (2E)-4-hydroxy-3-methylbut-2-enyl diphosphate. H136 provides a ligand contact to dimethylallyl diphosphate. H136 is an isopentenyl diphosphate binding site. E138 serves as the catalytic Proton donor. T177 is a (2E)-4-hydroxy-3-methylbut-2-enyl diphosphate binding site. C207 lines the [4Fe-4S] cluster pocket. The (2E)-4-hydroxy-3-methylbut-2-enyl diphosphate site is built by S235, S236, N237, and S280. Positions 235, 236, 237, and 280 each coordinate dimethylallyl diphosphate. Residues S235, S236, N237, and S280 each coordinate isopentenyl diphosphate.

The protein belongs to the IspH family. It depends on [4Fe-4S] cluster as a cofactor.

The catalysed reaction is isopentenyl diphosphate + 2 oxidized [2Fe-2S]-[ferredoxin] + H2O = (2E)-4-hydroxy-3-methylbut-2-enyl diphosphate + 2 reduced [2Fe-2S]-[ferredoxin] + 2 H(+). It catalyses the reaction dimethylallyl diphosphate + 2 oxidized [2Fe-2S]-[ferredoxin] + H2O = (2E)-4-hydroxy-3-methylbut-2-enyl diphosphate + 2 reduced [2Fe-2S]-[ferredoxin] + 2 H(+). The protein operates within isoprenoid biosynthesis; dimethylallyl diphosphate biosynthesis; dimethylallyl diphosphate from (2E)-4-hydroxy-3-methylbutenyl diphosphate: step 1/1. It participates in isoprenoid biosynthesis; isopentenyl diphosphate biosynthesis via DXP pathway; isopentenyl diphosphate from 1-deoxy-D-xylulose 5-phosphate: step 6/6. In terms of biological role, catalyzes the conversion of 1-hydroxy-2-methyl-2-(E)-butenyl 4-diphosphate (HMBPP) into a mixture of isopentenyl diphosphate (IPP) and dimethylallyl diphosphate (DMAPP). Acts in the terminal step of the DOXP/MEP pathway for isoprenoid precursor biosynthesis. The polypeptide is 4-hydroxy-3-methylbut-2-enyl diphosphate reductase (Rhizobium rhizogenes (strain K84 / ATCC BAA-868) (Agrobacterium radiobacter)).